Here is a 129-residue protein sequence, read N- to C-terminus: UPF0325 protein Spro_3794 (129 aa).

This sequence belongs to the UPF0325 family.

This is UPF0325 protein Spro_3794 from Serratia proteamaculans (strain 568).